The following is a 266-amino-acid chain: Thymidylate synthase (266 aa).

DUMP is bound by residues Arg21 and 127 to 128 (RR). The Nucleophile role is filled by Cys147. Residues 168–171 (RSAD), Asn179, and 209–211 (HIY) contribute to the dUMP site. Asp171 lines the (6R)-5,10-methylene-5,6,7,8-tetrahydrofolate pocket. Ala265 serves as a coordination point for (6R)-5,10-methylene-5,6,7,8-tetrahydrofolate.

This sequence belongs to the thymidylate synthase family. Bacterial-type ThyA subfamily. In terms of assembly, homodimer.

Its subcellular location is the cytoplasm. The enzyme catalyses dUMP + (6R)-5,10-methylene-5,6,7,8-tetrahydrofolate = 7,8-dihydrofolate + dTMP. It functions in the pathway pyrimidine metabolism; dTTP biosynthesis. In terms of biological role, catalyzes the reductive methylation of 2'-deoxyuridine-5'-monophosphate (dUMP) to 2'-deoxythymidine-5'-monophosphate (dTMP) while utilizing 5,10-methylenetetrahydrofolate (mTHF) as the methyl donor and reductant in the reaction, yielding dihydrofolate (DHF) as a by-product. This enzymatic reaction provides an intracellular de novo source of dTMP, an essential precursor for DNA biosynthesis. This chain is Thymidylate synthase, found in Brachyspira hyodysenteriae (strain ATCC 49526 / WA1).